The primary structure comprises 276 residues: Octanoyltransferase LipM (276 aa).

The BPL/LPL catalytic domain maps to 33 to 247; it reads GELKPTLRFY…GFKDAFSLTF (215 aa). The active-site Acyl-thioester intermediate is Cys150.

It belongs to the octanoyltransferase LipM family. Monomer.

It carries out the reaction octanoyl-[ACP] + L-lysyl-[protein] = N(6)-octanoyl-L-lysyl-[protein] + holo-[ACP] + H(+). It functions in the pathway protein modification; protein lipoylation via endogenous pathway; protein N(6)-(lipoyl)lysine from octanoyl-[acyl-carrier-protein]. Catalyzes the transfer of endogenously produced octanoic acid from octanoyl-acyl-carrier-protein onto the lipoyl domain of GcvH, an intermediate carrier during protein lipoylation. This Exiguobacterium sp. (strain ATCC BAA-1283 / AT1b) protein is Octanoyltransferase LipM.